The sequence spans 503 residues: Maturase K (503 aa).

It belongs to the intron maturase 2 family. MatK subfamily.

It is found in the plastid. The protein localises to the chloroplast. In terms of biological role, usually encoded in the trnK tRNA gene intron. Probably assists in splicing its own and other chloroplast group II introns. The protein is Maturase K of Panax ginseng (Korean ginseng).